Reading from the N-terminus, the 505-residue chain is Protein DETOXIFICATION 50 (505 aa).

12 helical membrane passes run 46-66 (LVLT…FLGG), 78-98 (AAAF…MGVE), 121-141 (IILL…MEKI), 155-175 (AHIF…LHPL), 194-214 (IASF…GLGI), 219-239 (LSGV…ICFF), 275-295 (ISVC…GFLL), 305-325 (GILI…SLGV), 344-364 (AAIV…AFTV), 380-400 (IMKL…GNCP), 424-444 (AFYA…GFGF), and 446-466 (GLWL…MAAT).

The protein belongs to the multi antimicrobial extrusion (MATE) (TC 2.A.66.1) family. As to expression, preferentially expressed in rosette leaves. Detected mainly in the vascular tissues and guard cells. Mostly detected at reproductive stages in young anthers, in mature pollens and during pollen germination on the pistil. Also expressed in developing seeds.

The protein resides in the cell membrane. Its subcellular location is the late endosome membrane. In terms of biological role, functions as a multidrug and toxin extrusion transporter in the export of abscisic acid (ABA) in guard cells. Plays a role in ABA-mediated growth inhibition and responses to drought conditions. May act as a negative regulator of hypocotyl cell elongation in the light. This Arabidopsis thaliana (Mouse-ear cress) protein is Protein DETOXIFICATION 50.